The sequence spans 397 residues: Argininosuccinate synthase (397 aa).

8 to 16 (AYSGGLDTS) lines the ATP pocket. L-citrulline contacts are provided by Tyr-86 and Ser-91. Gly-116 contacts ATP. 3 residues coordinate L-aspartate: Thr-118, Asn-122, and Asp-123. Residue Asn-122 participates in L-citrulline binding. The L-citrulline site is built by Arg-126, Ser-175, Ser-184, Glu-260, and Tyr-272.

The protein belongs to the argininosuccinate synthase family. Type 1 subfamily. Homotetramer.

It localises to the cytoplasm. It catalyses the reaction L-citrulline + L-aspartate + ATP = 2-(N(omega)-L-arginino)succinate + AMP + diphosphate + H(+). It functions in the pathway amino-acid biosynthesis; L-arginine biosynthesis; L-arginine from L-ornithine and carbamoyl phosphate: step 2/3. The sequence is that of Argininosuccinate synthase from Clostridium botulinum (strain Okra / Type B1).